Reading from the N-terminus, the 133-residue chain is Complexin-1 (133 aa).

Disordered regions lie at residues 1 to 40 and 85 to 112; these read MDFVMKQALGGATKDMGKMLGGDEEKDPDAEKKEEERLEA and AMEAQAEGSLTRPKKAIPAGCGDEDEEE. A compositionally biased stretch (basic and acidic residues) spans 15–40; sequence DMGKMLGGDEEKDPDAEKKEEERLEA. Residues 28–60 adopt a coiled-coil conformation; the sequence is PDAEKKEEERLEALRQAEEERAGKYAKMEAERE.

It belongs to the complexin/synaphin family. Binds to the SNARE core complex containing SNAP25, VAMP2 and syntaxin-1. Nervous system. Present in electric organ (at protein level).

The protein resides in the cytoplasm. It localises to the cytosol. In terms of biological role, positively regulates a late step in synaptic vesicle exocytosis. In Narke japonica (Japanese sleeper ray), this protein is Complexin-1.